A 2134-amino-acid chain; its full sequence is Tudor domain-containing protein 6 (2134 aa).

The segment at Arg287 to Pro315 is disordered. Thr292 carries the phosphothreonine modification. 4 consecutive Tudor domains span residues Pro309–Met368, Arg542–Leu599, Tyr820–Val879, and Thr1038–Val1092. The segment at Ser1271–Pro1296 is disordered. A compositionally biased stretch (basic and acidic residues) spans Leu1282 to Pro1296. Tudor domains follow at residues Gln1358–Leu1417 and Cys1570–Val1630. 2 disordered regions span residues Lys1699 to Lys1733 and Leu1860 to Gly1885. The segment covering Leu1711–Gly1722 has biased composition (basic and acidic residues). Ser1723 and Ser1726 each carry phosphoserine. A Phosphoserine modification is found at Ser1925. Positions Ala1930–Arg1939 are enriched in polar residues. Residues Ala1930 to Pro1985 are disordered. Phosphoserine is present on residues Ser1980, Ser2063, and Ser2115.

As to quaternary structure, found in a mRNP complex (i.e. messenger ribonucleoproteins which correspond to mRNA with bound proteins), at least composed of TDRD1, TDRD6, TDRD7 and DDX4. Found in a complex, at least composed of PIWIL1, PIWIL2, DDX4 and TDRD6. Interacts with Tex19.1 and probably Tex19.2. Interacts with PRMT5. Interacts with SNRPB (when methylated); to trigger spliceosome formation. Post-translationally, undergoes proteolytic cleavage near the C-terminal by an unknown protease during the transition from meiosis I to meiosis II in primary spermatocytes. Testis specific. Expressed in primary spermatocytes at post natal (PN) day 17.5. Expressed in midpachytene stage of primary spermatocytes at PN16 and in round spermatids at PN22 (at protein level).

It is found in the cytoplasm. Its function is as follows. Tudor domain-containing protein involved in germ cell development, more specifically the formation of chromatoid body (during spermiogenesis), Balbiani body (during oogenesis), germ plasm (upon fertilization), and for proper miRNA expression and spliceosome maturation. Essential for RNA-dependent helicase UPF1 localization to chromatoid body, for UPF1-UPF2 and UPF1-DDX4 interactions which are required for mRNA degradation, using the extended 3' UTR-triggered nonsense-mediated mRNA decay (NMD) pathway. Involved in spliceosome maturation and mRNA splicing in prophase I spermatocytes through interaction with arginine N-methyltransferase PRMT5 and symmetrically arginine dimethylated SNRPB (small nuclear ribonucleoprotein-associated protein). This Mus musculus (Mouse) protein is Tudor domain-containing protein 6.